A 195-amino-acid polypeptide reads, in one-letter code: Peptidyl-tRNA hydrolase (195 aa).

Residue Tyr-17 coordinates tRNA. The Proton acceptor role is filled by His-22. 3 residues coordinate tRNA: Tyr-68, Asn-70, and Asn-116.

Belongs to the PTH family. Monomer.

It is found in the cytoplasm. It carries out the reaction an N-acyl-L-alpha-aminoacyl-tRNA + H2O = an N-acyl-L-amino acid + a tRNA + H(+). In terms of biological role, hydrolyzes ribosome-free peptidyl-tRNAs (with 1 or more amino acids incorporated), which drop off the ribosome during protein synthesis, or as a result of ribosome stalling. Its function is as follows. Catalyzes the release of premature peptidyl moieties from peptidyl-tRNA molecules trapped in stalled 50S ribosomal subunits, and thus maintains levels of free tRNAs and 50S ribosomes. This Shewanella putrefaciens (strain CN-32 / ATCC BAA-453) protein is Peptidyl-tRNA hydrolase.